Consider the following 236-residue polypeptide: Small ribosomal subunit protein uS2c (236 aa).

It belongs to the universal ribosomal protein uS2 family.

The protein resides in the plastid. It is found in the chloroplast. In Liriodendron tulipifera (Tuliptree), this protein is Small ribosomal subunit protein uS2c (rps2).